The sequence spans 235 residues: Transmembrane protein 176A (235 aa).

Serine 38 is subject to Phosphoserine. The next 4 membrane-spanning stretches (helical) occupy residues 55–75 (VASWVMQIVLGILSAVLGGFF), 86–106 (SGAAIWTGAVAVLAGAAAFIY), 113–133 (YWALLRTLLTLAAFSTAIAAL), and 193–213 (AMLLGVWILLLLASLTPLWLY).

It belongs to the TMEM176 family. In terms of assembly, interacts with MCOLN2.

The protein localises to the membrane. The polypeptide is Transmembrane protein 176A (TMEM176A) (Homo sapiens (Human)).